We begin with the raw amino-acid sequence, 122 residues long: Small ribosomal subunit protein uS12 (122 aa).

Residue Asp89 is modified to 3-methylthioaspartic acid.

Belongs to the universal ribosomal protein uS12 family. As to quaternary structure, part of the 30S ribosomal subunit. Contacts proteins S8 and S17. May interact with IF1 in the 30S initiation complex.

With S4 and S5 plays an important role in translational accuracy. Its function is as follows. Interacts with and stabilizes bases of the 16S rRNA that are involved in tRNA selection in the A site and with the mRNA backbone. Located at the interface of the 30S and 50S subunits, it traverses the body of the 30S subunit contacting proteins on the other side and probably holding the rRNA structure together. The combined cluster of proteins S8, S12 and S17 appears to hold together the shoulder and platform of the 30S subunit. In Corynebacterium glutamicum (strain R), this protein is Small ribosomal subunit protein uS12.